We begin with the raw amino-acid sequence, 528 residues long: Keratin, type II cytoskeletal 78 (528 aa).

Residues 1–104 (MSLSPCRARR…DPQFQVVRTQ (104 aa)) are head. A disordered region spans residues 23–45 (VGRGRTGFSSRSLSSFGGCRGGS). Positions 24–39 (GRGRTGFSSRSLSSFG) are enriched in low complexity. A coil 1A region spans residues 105–140 (ETQQIRVLNNQFASFIDKVRFLEQQNKVLETKWHLL). The IF rod domain occupies 105–418 (ETQQIRVLNN…RLLEGEECRM (314 aa)). Residues 141 to 159 (QQQGLSDRPQGLESFFEAY) form a linker 1 region. The coil 1B stretch occupies residues 160–252 (LVRLRTQLEE…LYEEELGQLQ (93 aa)). The tract at residues 253-275 (TQASDMSVVLSMDNNRCLDFRDL) is linker 12. The tract at residues 276–415 (IAEVRARYEE…TYRRLLEGEE (140 aa)) is coil 2. The tract at residues 416–528 (CRMSGECASQ…ESSLKTSVTY (113 aa)) is tail.

The protein belongs to the intermediate filament family. As to quaternary structure, heterotetramer of two type I and two type II keratins.

This Bos taurus (Bovine) protein is Keratin, type II cytoskeletal 78 (KRT78).